Reading from the N-terminus, the 567-residue chain is Glutamine--tRNA ligase (567 aa).

The short motif at 47 to 57 (PEPNGYLHIGH) is the 'HIGH' region element. Residues 48-50 (EPN) and 54-60 (HIGHAKS) contribute to the ATP site. Residues aspartate 80 and tyrosine 225 each coordinate L-glutamine. Residues threonine 244 and 274–275 (RL) contribute to the ATP site. The 'KMSKS' region signature appears at 281-285 (ITSKR).

Belongs to the class-I aminoacyl-tRNA synthetase family. Monomer.

The protein resides in the cytoplasm. The enzyme catalyses tRNA(Gln) + L-glutamine + ATP = L-glutaminyl-tRNA(Gln) + AMP + diphosphate. In Pseudomonas putida (strain ATCC 47054 / DSM 6125 / CFBP 8728 / NCIMB 11950 / KT2440), this protein is Glutamine--tRNA ligase.